Here is a 148-residue protein sequence, read N- to C-terminus: MYFAIRLSFVLAVLFCLTGNGSARMLDADRNRLQQLQIRSQQSTDANTQVDIAYEVIGIYDKYKGQGGSNVLREAQLNSQVNDFKRKTMVIDGVPAQGGVWGILGAIKKAADAVPDNVKKDAENLVKSSTKVLVRGIYDYLMGKMKQH.

Positions M1–A23 are cleaved as a signal peptide.

This sequence belongs to the Turandot family.

It localises to the secreted. A humoral factor that may play a role in stress tolerance. The protein is Protein Turandot Z of Drosophila sechellia (Fruit fly).